We begin with the raw amino-acid sequence, 255 residues long: Small ribosomal subunit protein uS2 (255 aa).

The tract at residues 226–255 (QGVSNEEVAAEQNIDLDEKEKSEETEATEE) is disordered.

It belongs to the universal ribosomal protein uS2 family.

The protein is Small ribosomal subunit protein uS2 of Staphylococcus aureus (strain Mu3 / ATCC 700698).